The sequence spans 210 residues: Large ribosomal subunit protein uL4 (210 aa).

Residues 44 to 54 show a composition bias toward polar residues; sequence KRQGTASTLTR. Residues 44–85 are disordered; it reads KRQGTASTLTRSEVRGGGRKPYKQKGTGRARQGSIRTPLRPG. Residues 60-71 show a composition bias toward basic residues; it reads GGRKPYKQKGTG.

The protein belongs to the universal ribosomal protein uL4 family. Part of the 50S ribosomal subunit.

One of the primary rRNA binding proteins, this protein initially binds near the 5'-end of the 23S rRNA. It is important during the early stages of 50S assembly. It makes multiple contacts with different domains of the 23S rRNA in the assembled 50S subunit and ribosome. In terms of biological role, forms part of the polypeptide exit tunnel. In Prochlorococcus marinus (strain MIT 9301), this protein is Large ribosomal subunit protein uL4.